Here is a 353-residue protein sequence, read N- to C-terminus: uncharacterized protein (353 aa).

In terms of domain architecture, HTH luxR-type spans asparagine 18 to phenylalanine 83. The segment at residues valine 42–methionine 61 is a DNA-binding region (H-T-H motif). One can recognise an EAL domain in the interval asparagine 98–leucine 350.

This is an uncharacterized protein from Escherichia coli (strain K12).